The primary structure comprises 1034 residues: Platelet endothelial aggregation receptor 1 (1034 aa).

The signal sequence occupies residues 1 to 18 (MPLCPLLLLALGLRLTGT). Residues 19–754 (LNSNDPNVCT…PTSPVTHNSL (736 aa)) are Extracellular-facing. Positions 23–101 (DPNVCTFWES…YYESRGACVP (79 aa)) constitute an EMI domain. Cystine bridges form between Cys-27–Cys-89, Cys-53–Cys-63, and Cys-88–Cys-99. Residue Asn-150 is glycosylated (N-linked (GlcNAc...) asparagine). EGF-like domains follow at residues 181-215 (YGPACQFDCQCYGASCDPQDGACFCPPGRAGPSCN), 223-258 (DGFFCPRTYPCQNGGVPQGSQGSCSCPPGWMGVICS), 266-301 (HGPNCTQECRCHNGGLCDRFTGQCHCAPGYIGDRCQ), 309-344 (FGQDCAETCDCAPGARCFPANGACLCEHGFTGDRCT), and 398-433 (HGPGCQEHCLCLHGGLCLADSGLCRCAPGYTGPHCA). 5 disulfides stabilise this stretch: Cys-185–Cys-196, Cys-189–Cys-203, Cys-205–Cys-214, Cys-233–Cys-246, and Cys-248–Cys-257. A glycan (N-linked (GlcNAc...) asparagine) is linked at Asn-269. Disulfide bonds link Cys-270–Cys-282, Cys-276–Cys-289, Cys-291–Cys-300, Cys-313–Cys-325, Cys-319–Cys-332, Cys-334–Cys-343, Cys-402–Cys-414, Cys-408–Cys-421, and Cys-423–Cys-432. Asn-474 is a glycosylation site (N-linked (GlcNAc...) asparagine). EGF-like domains are found at residues 484 to 519 (WGFNCNASCQCAHDGVCSPQTGACTCTPGWHGAHCQ), 575 to 605 (SNTCTCKNGGTCVSENGNCVCAPGFRGPSCQ), 613 to 648 (YGKRCVQCKCNNNHSSCHPSDGTCSCLAGWTGPDCS), and 656 to 691 (WGLKCSQLCQCHHGGTCHPQDGSCICTPGWTGPNCL). Disulfide bonds link Cys-488–Cys-500, Cys-494–Cys-507, Cys-509–Cys-518, Cys-578–Cys-586, Cys-580–Cys-593, Cys-595–Cys-604, Cys-617–Cys-629, Cys-622–Cys-636, Cys-638–Cys-647, Cys-660–Cys-672, Cys-666–Cys-679, and Cys-681–Cys-690. Residues 755–775 (GAVIGIAVLGTLVVALIALFI) form a helical membrane-spanning segment. Residues 776-1034 (GYRQWQKGKE…PSPPSRRQDR (259 aa)) are Cytoplasmic-facing. The tract at residues 823–883 (TLSQCSPNPP…PHERGASHLD (61 aa)) is disordered. Residues 851 to 883 (RPSRAHGRENHVTLPADWKHRREPHERGASHLD) show a composition bias toward basic and acidic residues. Tyr-923 is subject to Phosphotyrosine. Positions 925–1034 (TIRDLPSLPG…PSPPSRRQDR (110 aa)) are disordered. Ser-951 carries the phosphoserine modification. Residues 972–991 (DSGTYEQPSPLSHNEESLGS) are compositionally biased toward polar residues. Ser-1026 carries the post-translational modification Phosphoserine.

Belongs to the MEGF family. In terms of assembly, interacts with SHC2 upon its aggregation-induced tyrosine phosphorylation. Interacts (via extracellular domain) with SVEP1. In terms of processing, phosphorylated in the intracellular domain on tyrosine residues. Phosphorylated on tyrosine residues by SRC. Tyrosine phosphorylation is detected upon platelet aggregation stimulated by collagen, TRAP and thrombin and platelet-platelet contacts but not after platelet activation. Tyrosine phosphorylation enhanced its association with SHC1 and SHC2. Phosphorylated in the intracellular domain on tyrosine residues. Phosphorylated when in the presence of SVEP1. Expressed in thymocytes, bone marrow stromal and osteogenic cells (at protein level). Strongly expressed in kidney and heart. Moderately expressed in lung, spleen, thymus, liver, brain, testis, skin and stomach. Expressed in hematopoietic stem progenitor cells.

Its subcellular location is the cell membrane. It localises to the cell projection. The protein localises to the lamellipodium. Functionally, required for SVEP1-mediated platelet activation, via its interaction with SVEP1 and subsequent activation of AKT/mTOR signaling. May be involved in the early stages of hematopoiesis. The chain is Platelet endothelial aggregation receptor 1 (Pear1) from Mus musculus (Mouse).